A 298-amino-acid polypeptide reads, in one-letter code: Inosose dehydratase (298 aa).

Belongs to the IolE/MocC family. Glutathione is required as a cofactor. It depends on Co(2+) as a cofactor. The cofactor is Mn(2+).

It carries out the reaction scyllo-inosose = 3D-3,5/4-trihydroxycyclohexane-1,2-dione + H2O. It participates in polyol metabolism; myo-inositol degradation into acetyl-CoA; acetyl-CoA from myo-inositol: step 2/7. Its function is as follows. Catalyzes the dehydration of inosose (2-keto-myo-inositol, 2KMI or 2,4,6/3,5-pentahydroxycyclohexanone) to 3D-(3,5/4)-trihydroxycyclohexane-1,2-dione (D-2,3-diketo-4-deoxy-epi-inositol). The chain is Inosose dehydratase from Clostridium botulinum (strain Alaska E43 / Type E3).